We begin with the raw amino-acid sequence, 366 residues long: NADP-dependent oxidoreductase domain-containing protein 1 (366 aa).

Belongs to the pyrroline-5-carboxylate reductase family.

Its function is as follows. Probable oxidoreductase. The sequence is that of NADP-dependent oxidoreductase domain-containing protein 1 (Noxred1) from Mus musculus (Mouse).